We begin with the raw amino-acid sequence, 743 residues long: 1,4-alpha-glucan branching enzyme GlgB (743 aa).

D416 serves as the catalytic Nucleophile. E469 (proton donor) is an active-site residue.

It belongs to the glycosyl hydrolase 13 family. GlgB subfamily. As to quaternary structure, monomer.

It catalyses the reaction Transfers a segment of a (1-&gt;4)-alpha-D-glucan chain to a primary hydroxy group in a similar glucan chain.. Its pathway is glycan biosynthesis; glycogen biosynthesis. Functionally, catalyzes the formation of the alpha-1,6-glucosidic linkages in glycogen by scission of a 1,4-alpha-linked oligosaccharide from growing alpha-1,4-glucan chains and the subsequent attachment of the oligosaccharide to the alpha-1,6 position. In Shewanella baltica (strain OS195), this protein is 1,4-alpha-glucan branching enzyme GlgB.